Reading from the N-terminus, the 714-residue chain is Fatty acid oxidation complex subunit alpha (714 aa).

The enoyl-CoA hydratase stretch occupies residues 1-190; sequence MEMTSAFTLN…KLGLVDDVVP (190 aa). The interval 306 to 714 is 3-hydroxyacyl-CoA dehydrogenase; sequence APLNSVGILG…FWKTTATDLQ (409 aa).

This sequence in the N-terminal section; belongs to the enoyl-CoA hydratase/isomerase family. The protein in the central section; belongs to the 3-hydroxyacyl-CoA dehydrogenase family. Heterotetramer of two alpha chains (FadJ) and two beta chains (FadI).

Its subcellular location is the cytoplasm. The catalysed reaction is a (3S)-3-hydroxyacyl-CoA = a (2E)-enoyl-CoA + H2O. It carries out the reaction a 4-saturated-(3S)-3-hydroxyacyl-CoA = a (3E)-enoyl-CoA + H2O. It catalyses the reaction a (3S)-3-hydroxyacyl-CoA + NAD(+) = a 3-oxoacyl-CoA + NADH + H(+). The enzyme catalyses (3S)-3-hydroxybutanoyl-CoA = (3R)-3-hydroxybutanoyl-CoA. It functions in the pathway lipid metabolism; fatty acid beta-oxidation. Functionally, catalyzes the formation of a hydroxyacyl-CoA by addition of water on enoyl-CoA. Also exhibits 3-hydroxyacyl-CoA epimerase and 3-hydroxyacyl-CoA dehydrogenase activities. The sequence is that of Fatty acid oxidation complex subunit alpha from Escherichia coli (strain 55989 / EAEC).